We begin with the raw amino-acid sequence, 330 residues long: GMP reductase (330 aa).

Cys180 functions as the Thioimidate intermediate in the catalytic mechanism. 209-232 contributes to the NADP(+) binding site; the sequence is LIADGGIRHNGDIAKSVRFGASMV.

This sequence belongs to the IMPDH/GMPR family. GuaC type 2 subfamily.

The catalysed reaction is IMP + NH4(+) + NADP(+) = GMP + NADPH + 2 H(+). Its function is as follows. Catalyzes the irreversible NADPH-dependent deamination of GMP to IMP. It functions in the conversion of nucleobase, nucleoside and nucleotide derivatives of G to A nucleotides, and in maintaining the intracellular balance of A and G nucleotides. In Lactobacillus gasseri (strain ATCC 33323 / DSM 20243 / BCRC 14619 / CIP 102991 / JCM 1131 / KCTC 3163 / NCIMB 11718 / NCTC 13722 / AM63), this protein is GMP reductase.